The primary structure comprises 463 residues: Nucleobindin-1 (463 aa).

Positions 1–26 are cleaved as a signal peptide; that stretch reads MPPSGPQGTLLLLPLLLLLLLRAVLA. The residue at position 86 (Ser-86) is a Phosphoserine. Position 148 is a phosphothreonine (Thr-148). A coiled-coil region spans residues 150–218; it reads EARDLELLIQ…QQRRHREHPK (69 aa). Residues 172–218 mediate DNA binding; sequence HHEEFKRYEMLKEHERRRYLESLGEEQRKEAERRLEEQQRRHREHPK. Positions 193–210 are enriched in basic and acidic residues; the sequence is SLGEEQRKEAERRLEEQQ. Residues 193–221 form a disordered region; it reads SLGEEQRKEAERRLEEQQRRHREHPKVNV. The interval 228 to 321 is binds to GNAI2 and GNAI3; sequence LKEVWEELDG…VTLGEFLAST (94 aa). EF-hand domains lie at 240 to 275 and 292 to 327; these read PNRF…ELEK and ERLR…KEFG. Asp-253, Asn-255, Asp-257, Glu-264, Asp-305, Asn-307, Asp-309, and Glu-316 together coordinate Ca(2+). The GBA motif lies at 303–333; it reads NVDTNQDRLVTLGEFLASTQRKEFGDTGEGW. Residues 341-409 are a coiled coil; sequence AYTEEELRRF…KQQQQQQQQQ (69 aa). The tract at residues 368-463 is disordered; the sequence is LSQETEALGR…LPEVEVPQHL (96 aa). Residue Ser-369 is modified to Phosphoserine. Over residues 439–463 the composition is skewed to basic and acidic residues; the sequence is DQKEVDTSEKKLLERLPEVEVPQHL.

It belongs to the nucleobindin family. In terms of assembly, interacts (via GBA motif) with guanine nucleotide-binding protein G(i) alpha subunits GNAI1, GNAI2 and GNAI3 with higher affinity for GNAI1 and GNAI3 than for GNAI2. Preferentially interacts with inactive rather than active GNAI3. Interaction with GNAI3 is inhibited when NUCB1 binds calcium, probably due to a conformational change which renders the GBA motif inaccessible.

The protein localises to the golgi apparatus. It is found in the cis-Golgi network membrane. It localises to the cytoplasm. Its subcellular location is the secreted. Its function is as follows. Major calcium-binding protein of the Golgi which may have a role in calcium homeostasis. Acts as a non-receptor guanine nucleotide exchange factor which binds to and activates alpha subunits of guanine nucleotide-binding proteins (G proteins). The sequence is that of Nucleobindin-1 (NUCB1) from Pongo abelii (Sumatran orangutan).